The chain runs to 464 residues: Citrate synthase, mitochondrial (464 aa).

The N-terminal 27 residues, 1–27 (MALLTAAARLFGAKNASCLVLAARHAS), are a transit peptide targeting the mitochondrion. Residues 2-21 (ALLTAAARLFGAKNASCLVL) carry the SIFI-degron motif. N6-acetyllysine; alternate is present on lysine 76. Residue lysine 76 is modified to N6-succinyllysine; alternate. Residues lysine 103 and lysine 193 each carry the N6-succinyllysine modification. Position 226 is a phosphoserine (serine 226). Histidine 301 is an active-site residue. Lysine 321 and lysine 327 each carry N6-acetyllysine; alternate. Residues lysine 321 and lysine 327 each carry the N6-succinyllysine; alternate modification. The active site involves histidine 347. Arginine 356 is an oxaloacetate binding site. At lysine 375 the chain carries N6-acetyllysine; alternate. Lysine 375 carries the post-translational modification N6-succinyllysine; alternate. Residue lysine 382 is modified to N6-acetyllysine. At lysine 393 the chain carries N6-acetyllysine; alternate. Position 393 is an N6-succinyllysine; alternate (lysine 393). Lysine 395 carries the post-translational modification N6,N6,N6-trimethyllysine. The active site involves aspartate 402. Residues arginine 428 and arginine 448 each contribute to the oxaloacetate site. Lysine 450 carries the N6-succinyllysine modification. Lysine 459 carries the N6-acetyllysine; alternate modification. Lysine 459 carries the post-translational modification N6-succinyllysine; alternate.

This sequence belongs to the citrate synthase family. Homodimer. In terms of processing, methylated. Trimethylation at Lys-395 by CSKMT decreases citrate synthase activity. Post-translationally, in response to mitochondrial stress, the precursor protein is ubiquitinated by the SIFI complex in the cytoplasm before mitochondrial import, leading to its degradation. Within the SIFI complex, UBR4 initiates ubiquitin chain that are further elongated or branched by KCMF1.

Its subcellular location is the mitochondrion matrix. It catalyses the reaction oxaloacetate + acetyl-CoA + H2O = citrate + CoA + H(+). The protein operates within carbohydrate metabolism; tricarboxylic acid cycle; isocitrate from oxaloacetate: step 1/2. Key enzyme of the Krebs tricarboxylic acid cycle which catalyzes the synthesis of citrate from acetyl coenzyme A and oxaloacetate. This chain is Citrate synthase, mitochondrial (CS), found in Sus scrofa (Pig).